We begin with the raw amino-acid sequence, 320 residues long: Ribose-phosphate pyrophosphokinase 3 (320 aa).

Residues Asp-131, His-133, Asp-142, and Asp-146 each coordinate Mg(2+).

This sequence belongs to the ribose-phosphate pyrophosphokinase family.

Its subcellular location is the cytoplasm. The catalysed reaction is D-ribose 5-phosphate + ATP = 5-phospho-alpha-D-ribose 1-diphosphate + AMP + H(+). It participates in metabolic intermediate biosynthesis; 5-phospho-alpha-D-ribose 1-diphosphate biosynthesis; 5-phospho-alpha-D-ribose 1-diphosphate from D-ribose 5-phosphate (route I): step 1/1. In terms of biological role, 5-phosphoribose 1-diphosphate synthase involved in nucleotide, histidine, and tryptophan biosynthesis. Active in heteromultimeric complexes with other 5-phosphoribose 1-diphosphate synthases (PRS2, PRS3, PRS4 and PRS5). In Saccharomyces cerevisiae (strain ATCC 204508 / S288c) (Baker's yeast), this protein is Ribose-phosphate pyrophosphokinase 3 (PRS3).